Reading from the N-terminus, the 418-residue chain is 3-isopropylmalate dehydratase large subunit 1 (418 aa).

Cys-298, Cys-358, and Cys-361 together coordinate [4Fe-4S] cluster.

This sequence belongs to the aconitase/IPM isomerase family. LeuC type 2 subfamily. Heterodimer of LeuC and LeuD. Requires [4Fe-4S] cluster as cofactor.

The catalysed reaction is (2R,3S)-3-isopropylmalate = (2S)-2-isopropylmalate. Its pathway is amino-acid biosynthesis; L-leucine biosynthesis; L-leucine from 3-methyl-2-oxobutanoate: step 2/4. In terms of biological role, catalyzes the isomerization between 2-isopropylmalate and 3-isopropylmalate, via the formation of 2-isopropylmaleate. The chain is 3-isopropylmalate dehydratase large subunit 1 from Thermotoga maritima (strain ATCC 43589 / DSM 3109 / JCM 10099 / NBRC 100826 / MSB8).